The primary structure comprises 389 residues: Sterol methyltransferase-like 2 (389 aa).

The chain crosses the membrane as a helical span at residues 25–45 (LSWKGAVGLVAATGIGYVLII).

It belongs to the class I-like SAM-binding methyltransferase superfamily. Erg6/SMT family.

It is found in the microsome membrane. In terms of biological role, unable to convert squalene, botryococcene, cycloartenol, zymosterol or lanosterol to mono-, di-, tri- or tetramethylated derivatives. This chain is Sterol methyltransferase-like 2 (SMT-2), found in Botryococcus braunii (Green alga).